Reading from the N-terminus, the 1271-residue chain is Probable WRKY transcription factor protein 1 (1271 aa).

Positions 1 to 12 (MGAQYSTELNKY) are enriched in polar residues. 3 disordered regions span residues 1 to 138 (MGAQ…NSDR), 204 to 312 (NNNN…QQNG), and 370 to 515 (NNNN…RTNS). Positions 9-71 (LNKYNNNNNN…NNNNNNNNNN (63 aa)) form a coiled coil. Composition is skewed to low complexity over residues 13 to 103 (NNNN…NNNN), 116 to 135 (INNT…NNNN), 204 to 216 (NNNN…NENN), and 223 to 259 (SSTT…NNNN). Acidic residues predominate over residues 260 to 274 (NEDDEDDYGDDDTIE). Residues 297-312 (SNLNDTNGGNSPQQNG) are compositionally biased toward polar residues. The stretch at 320-372 (KKLLALQQKQLEQEQEQKQQQKQQQQQQQQQQQQQQQQQQQQQKDAIENINNN) forms a coiled coil. Positions 370 to 388 (NNNNNNKLQPIVKNSVNKT) are enriched in low complexity. Residues 413 to 442 (NEDEYDASDEYIDDDDDDDEKYDDDDDEYF) show a composition bias toward acidic residues. Positions 443-458 (EGNNNNNYKKNNISNK) are enriched in low complexity. Basic and acidic residues predominate over residues 475–487 (EIFKQKKLNHDKN). Polar residues predominate over residues 488–515 (QSNPKQQLTSHSEFDNSLLNKNQSRTNS). Residues 520 to 574 (LQIKEENYHQIQQEHGEKQQQQQQQQQQPQQQQQQQQQQQQQQQQEMQVDKEQTE) adopt a coiled-coil conformation. Basic and acidic residues predominate over residues 578–587 (NTNKKEEQKP). 2 disordered regions span residues 578–650 (NTNK…EGFL) and 667–811 (SKKS…NISN). Residues 610-642 (NNENNNNNNNNNNNNNNNNNNNNNNNNNNYRNN) are compositionally biased toward low complexity. The segment covering 672–702 (NVVPTSPKSNLSDQQPPFSPVQISPQKQSPA) has biased composition (polar residues). Composition is skewed to low complexity over residues 703 to 715 (TTTT…TPTP), 725 to 766 (NNNI…NNIN), and 774 to 811 (NSTQ…NISN). A coiled-coil region spans residues 766–786 (NNEEDEENNSTQNNNNNNNNN). A DNA-binding region (WRKY 1) is located at residues 808–872 (NISNIVSDGY…YKGEHCHGFP (65 aa)). Residues C839, C844, H867, and H869 each contribute to the Zn(2+) site. The disordered stretch occupies residues 890–1095 (FEGLDGNNNN…RFNGTSESKG (206 aa)). The segment covering 895–918 (GNNNNNNNNNNNNNNYSSNSNSNG) has biased composition (low complexity). Residues 919-937 (NGNGNGNGNGNGNGNGNGN) show a composition bias toward gly residues. Positions 938–956 (SNGNQDQNGNSFNDQNGDS) are enriched in low complexity. Positions 957–966 (PTQHGQISPM) are enriched in polar residues. Residues 967 to 995 (NSPKNTIPTTTTTTTSISTYVNTNSTNKK) show a composition bias toward low complexity. Basic and acidic residues predominate over residues 998–1010 (SKQEKKISVKNET). A compositionally biased stretch (acidic residues) spans 1011–1021 (TDDDEFQEDID). Residues 1013-1040 (DDEFQEDIDQLSNNNNNNNNNNNNNNNN) are a coiled coil. Over residues 1025–1085 (NNNNNNNNNN…NNNNNNNNNN (61 aa)) the composition is skewed to low complexity. The WRKY 2 DNA-binding region spans 1105–1167 (SSIDHLDDGF…YRGKHNHDPP (63 aa)). 4 residues coordinate Zn(2+): C1136, C1141, H1162, and H1164. The tract at residues 1180-1210 (NGLYNNNNNNNNNNNNNNNNNNNNNNINNIN) is disordered. A compositionally biased stretch (low complexity) spans 1184–1210 (NNNNNNNNNNNNNNNNNNNNNNINNIN).

Belongs to the WRKY group I family.

It is found in the nucleus. Its function is as follows. Probable transcription factor. Interacts specifically with the W box (5'-(T)TGAC[CT]-3'), a frequently occurring elicitor-responsive cis-acting element. This is Probable WRKY transcription factor protein 1 (wrky1) from Dictyostelium discoideum (Social amoeba).